The primary structure comprises 287 residues: Protein REVEILLE 3 (287 aa).

The HTH myb-type domain maps to 56–110 (TITKSRENWTEQEHDKFLEALHLFDRDWKKIKAFVGSKTVIQIRSHAQKYFLKVQ). A DNA-binding region (H-T-H motif) is located at residues 83–106 (WKKIKAFVGSKTVIQIRSHAQKYF). Residues 111–135 (KNGTKEHLPPPRPKRKANHPYPQKA) form a disordered region.

It is found in the nucleus. Its function is as follows. Probable transcription factor. The chain is Protein REVEILLE 3 (RVE3) from Arabidopsis thaliana (Mouse-ear cress).